A 320-amino-acid chain; its full sequence is Biotin synthase (320 aa).

The 229-residue stretch at Asn39–Arg267 folds into the Radical SAM core domain. The [4Fe-4S] cluster site is built by Cys54, Cys58, and Cys61. Residues Cys98, Cys130, Cys190, and Arg262 each contribute to the [2Fe-2S] cluster site.

It belongs to the radical SAM superfamily. Biotin synthase family. As to quaternary structure, homodimer. It depends on [4Fe-4S] cluster as a cofactor. [2Fe-2S] cluster serves as cofactor.

It catalyses the reaction (4R,5S)-dethiobiotin + (sulfur carrier)-SH + 2 reduced [2Fe-2S]-[ferredoxin] + 2 S-adenosyl-L-methionine = (sulfur carrier)-H + biotin + 2 5'-deoxyadenosine + 2 L-methionine + 2 oxidized [2Fe-2S]-[ferredoxin]. It participates in cofactor biosynthesis; biotin biosynthesis; biotin from 7,8-diaminononanoate: step 2/2. In terms of biological role, catalyzes the conversion of dethiobiotin (DTB) to biotin by the insertion of a sulfur atom into dethiobiotin via a radical-based mechanism. The chain is Biotin synthase from Synechococcus elongatus (strain ATCC 33912 / PCC 7942 / FACHB-805) (Anacystis nidulans R2).